A 725-amino-acid chain; its full sequence is ATP-dependent zinc metalloprotease FtsH (725 aa).

At 1-11 (MDKMKKPKINW) the chain is on the cytoplasmic side. Residues 12 to 32 (LLIVIVGIIAALLITVLVLLF) traverse the membrane as a helical segment. At 33-160 (SPKTQPKSFD…LFGQHIVQEN (128 aa)) the chain is on the extracellular side. Residues 161–181 (GFITFIKAIWFPALIAIIIFL) traverse the membrane as a helical segment. The Cytoplasmic segment spans residues 182 to 725 (GYKAQSRAAS…EEETLAEKAE (544 aa)). 252–259 (GPPGTGKT) provides a ligand contact to ATP. Residue H474 participates in Zn(2+) binding. E475 is an active-site residue. Residues H478 and D552 each contribute to the Zn(2+) site. Residues 680 to 725 (QVNESQEKDKQKNAQIKEDLSKMDKKDNLTKAKDKGEEETLAEKAE) are disordered. The span at 684–725 (SQEKDKQKNAQIKEDLSKMDKKDNLTKAKDKGEEETLAEKAE) shows a compositional bias: basic and acidic residues.

It in the central section; belongs to the AAA ATPase family. The protein in the C-terminal section; belongs to the peptidase M41 family. In terms of assembly, homohexamer. The cofactor is Zn(2+).

The protein resides in the cell membrane. In terms of biological role, acts as a processive, ATP-dependent zinc metallopeptidase for both cytoplasmic and membrane proteins. Plays a role in the quality control of integral membrane proteins. The protein is ATP-dependent zinc metalloprotease FtsH of Mycoplasmopsis pulmonis (strain UAB CTIP) (Mycoplasma pulmonis).